A 123-amino-acid polypeptide reads, in one-letter code: Small ribosomal subunit protein uS12c (123 aa).

It belongs to the universal ribosomal protein uS12 family. In terms of assembly, part of the 30S ribosomal subunit.

Its subcellular location is the plastid. The protein resides in the chloroplast. Functionally, with S4 and S5 plays an important role in translational accuracy. Located at the interface of the 30S and 50S subunits. The polypeptide is Small ribosomal subunit protein uS12c (rps12) (Marchantia polymorpha (Common liverwort)).